The sequence spans 357 residues: MTTLKNDRFLRALLREPVDTTPIWMMRQAGRYLPEYRETRSKAGDFLSLCKNTEFACEVTLQPLRRYDLDAAILFSDILTIPDALGLGLYFETGEGPKFHKTVRTEQDVANLPKLNAKADLDYVMNAVSTIRSALGGQVPLIGFSGSPWTLATYMVEGGSSKEFRFTKQMMYAQPEVLHALLDHLADSVIDYLNAQIDAGAQAIQIFDSWGGALAHREYVEFSLNYMNKIIAGLQREKDGRRIPVIVFTKGGGQWLEPMIASGADALGLDWTTPLNTARNVVSGRVALQGNLDPAVLYGSAASIEKAVKAMLDDAYANGEKTGYVANLGHGITQWVDPAQPKIFVDTVHEYSAKYLG.

Substrate contacts are provided by residues 27-31 (RQAGR), Asp77, Tyr154, Ser209, and His330.

This sequence belongs to the uroporphyrinogen decarboxylase family. As to quaternary structure, homodimer.

Its subcellular location is the cytoplasm. The catalysed reaction is uroporphyrinogen III + 4 H(+) = coproporphyrinogen III + 4 CO2. The protein operates within porphyrin-containing compound metabolism; protoporphyrin-IX biosynthesis; coproporphyrinogen-III from 5-aminolevulinate: step 4/4. In terms of biological role, catalyzes the decarboxylation of four acetate groups of uroporphyrinogen-III to yield coproporphyrinogen-III. The polypeptide is Uroporphyrinogen decarboxylase (Acinetobacter baumannii (strain ACICU)).